Here is a 175-residue protein sequence, read N- to C-terminus: Large ribosomal subunit protein uL6 (175 aa).

The protein belongs to the universal ribosomal protein uL6 family. As to quaternary structure, part of the 50S ribosomal subunit.

In terms of biological role, this protein binds to the 23S rRNA, and is important in its secondary structure. It is located near the subunit interface in the base of the L7/L12 stalk, and near the tRNA binding site of the peptidyltransferase center. In Xylella fastidiosa (strain M23), this protein is Large ribosomal subunit protein uL6.